Consider the following 329-residue polypeptide: Phenylalanine--tRNA ligase alpha subunit (329 aa).

Mg(2+) is bound at residue Glu254.

Belongs to the class-II aminoacyl-tRNA synthetase family. Phe-tRNA synthetase alpha subunit type 1 subfamily. Tetramer of two alpha and two beta subunits. Mg(2+) serves as cofactor.

The protein localises to the cytoplasm. The catalysed reaction is tRNA(Phe) + L-phenylalanine + ATP = L-phenylalanyl-tRNA(Phe) + AMP + diphosphate + H(+). This is Phenylalanine--tRNA ligase alpha subunit from Histophilus somni (strain 129Pt) (Haemophilus somnus).